We begin with the raw amino-acid sequence, 122 residues long: MRWLLSILVRVVLVLCLCFAPLGIPVVARAAELPPVKHLDTPIDVNNTILRNYRQLPGFYPTLARILVKNAPYKSLEDMLQISGLTEQQKALIKANAENFVFGEYQEGANQLENRINQGYYG.

An N-terminal signal peptide occupies residues 1–30; that stretch reads MRWLLSILVRVVLVLCLCFAPLGIPVVARA.

It belongs to the PsbU family. PSII is composed of 1 copy each of membrane proteins PsbA, PsbB, PsbC, PsbD, PsbE, PsbF, PsbH, PsbI, PsbJ, PsbK, PsbL, PsbM, PsbT, PsbX, PsbY, PsbZ, Psb30/Ycf12, peripheral proteins PsbO, CyanoQ (PsbQ), PsbU, PsbV and a large number of cofactors. It forms dimeric complexes.

It is found in the cellular thylakoid membrane. One of the extrinsic, lumenal subunits of photosystem II (PSII). PSII is a light-driven water plastoquinone oxidoreductase, using light energy to abstract electrons from H(2)O, generating a proton gradient subsequently used for ATP formation. The extrinsic proteins stabilize the structure of photosystem II oxygen-evolving complex (OEC), the ion environment of oxygen evolution and protect the OEC against heat-induced inactivation. This is Photosystem II extrinsic protein U from Synechococcus sp. (strain JA-2-3B'a(2-13)) (Cyanobacteria bacterium Yellowstone B-Prime).